The sequence spans 171 residues: 3-hydroxyanthranilate 3,4-dioxygenase (171 aa).

Residue arginine 44 coordinates O2. The Fe cation site is built by histidine 48, glutamate 54, and histidine 92. Position 54 (glutamate 54) interacts with substrate. Substrate contacts are provided by arginine 96 and glutamate 106. Residues cysteine 121, cysteine 126, cysteine 160, and cysteine 163 each contribute to the a divalent metal cation site.

This sequence belongs to the 3-HAO family. It depends on Fe(2+) as a cofactor.

It localises to the cytoplasm. It catalyses the reaction 3-hydroxyanthranilate + O2 = (2Z,4Z)-2-amino-3-carboxymuconate 6-semialdehyde. Its pathway is cofactor biosynthesis; NAD(+) biosynthesis; quinolinate from L-kynurenine: step 3/3. Catalyzes the oxidative ring opening of 3-hydroxyanthranilate to 2-amino-3-carboxymuconate semialdehyde, which spontaneously cyclizes to quinolinate. The protein is 3-hydroxyanthranilate 3,4-dioxygenase of Yarrowia lipolytica (strain CLIB 122 / E 150) (Yeast).